The following is a 102-amino-acid chain: Large ribosomal subunit protein bL21 (102 aa).

The protein belongs to the bacterial ribosomal protein bL21 family. As to quaternary structure, part of the 50S ribosomal subunit. Contacts protein L20.

Functionally, this protein binds to 23S rRNA in the presence of protein L20. The chain is Large ribosomal subunit protein bL21 from Pediococcus pentosaceus (strain ATCC 25745 / CCUG 21536 / LMG 10740 / 183-1w).